Reading from the N-terminus, the 169-residue chain is Peptide deformylase (169 aa).

Fe cation-binding residues include Cys-91 and His-133. Glu-134 is an active-site residue. Residue His-137 coordinates Fe cation.

It belongs to the polypeptide deformylase family. Requires Fe(2+) as cofactor.

It catalyses the reaction N-terminal N-formyl-L-methionyl-[peptide] + H2O = N-terminal L-methionyl-[peptide] + formate. Its function is as follows. Removes the formyl group from the N-terminal Met of newly synthesized proteins. Requires at least a dipeptide for an efficient rate of reaction. N-terminal L-methionine is a prerequisite for activity but the enzyme has broad specificity at other positions. This Haemophilus influenzae (strain ATCC 51907 / DSM 11121 / KW20 / Rd) protein is Peptide deformylase.